The following is a 196-amino-acid chain: Xanthine phosphoribosyltransferase (196 aa).

Xanthine contacts are provided by leucine 26 and asparagine 33. 5-phospho-alpha-D-ribose 1-diphosphate is bound at residue 134-138 (ASGEA). A xanthine-binding site is contributed by lysine 162.

It belongs to the purine/pyrimidine phosphoribosyltransferase family. Xpt subfamily. In terms of assembly, homodimer.

The protein resides in the cytoplasm. The enzyme catalyses XMP + diphosphate = xanthine + 5-phospho-alpha-D-ribose 1-diphosphate. The protein operates within purine metabolism; XMP biosynthesis via salvage pathway; XMP from xanthine: step 1/1. Its function is as follows. Converts the preformed base xanthine, a product of nucleic acid breakdown, to xanthosine 5'-monophosphate (XMP), so it can be reused for RNA or DNA synthesis. This Moorella thermoacetica (strain ATCC 39073 / JCM 9320) protein is Xanthine phosphoribosyltransferase.